Reading from the N-terminus, the 306-residue chain is Acetaldehyde dehydrogenase (306 aa).

12–15 (SGNI) provides a ligand contact to NAD(+). Cys-127 acts as the Acyl-thioester intermediate in catalysis. NAD(+) is bound by residues 158–166 (SAGPGTRAN) and Asn-277.

Belongs to the acetaldehyde dehydrogenase family.

It catalyses the reaction acetaldehyde + NAD(+) + CoA = acetyl-CoA + NADH + H(+). This Mycolicibacterium gilvum (strain PYR-GCK) (Mycobacterium gilvum (strain PYR-GCK)) protein is Acetaldehyde dehydrogenase.